Here is a 249-residue protein sequence, read N- to C-terminus: MYKIVLLRHGESTWNKDNRFTGWTDVDLTEKGVEEARGAGHLLKREGYTFDLAYTSVLKRANKTLNIVLEELDSLWLPVEHSWRLNERHYGDLQGLNKAETAAKFGDDQVLVWRRSYDTPPPPLPEGDERLTSGDPRYASLPRAQFPRTECLKDTVARFVPYWETVIVPNILAGRRILIAAHGNSLRALIKYLDNISDSEIVGLNIPTAQPLVYELDANLRPIRSYYLADADTIRAAEAAVAGQGKAKG.

Substrate contacts are provided by residues 8–15 (RHGESTWN), 21–22 (TG), R60, 87–90 (ERHY), K98, 114–115 (RR), and 183–184 (GN). H9 (tele-phosphohistidine intermediate) is an active-site residue. The Proton donor/acceptor role is filled by E87.

Belongs to the phosphoglycerate mutase family. BPG-dependent PGAM subfamily. As to quaternary structure, homodimer.

The catalysed reaction is (2R)-2-phosphoglycerate = (2R)-3-phosphoglycerate. The protein operates within carbohydrate degradation; glycolysis; pyruvate from D-glyceraldehyde 3-phosphate: step 3/5. Its function is as follows. Catalyzes the interconversion of 2-phosphoglycerate and 3-phosphoglycerate. The sequence is that of 2,3-bisphosphoglycerate-dependent phosphoglycerate mutase from Aromatoleum aromaticum (strain DSM 19018 / LMG 30748 / EbN1) (Azoarcus sp. (strain EbN1)).